The chain runs to 469 residues: ABHD16B (469 aa).

The AB hydrolase-1 domain maps to V174–H298. Active-site charge relay system residues include S247, D322, and H418.

This sequence belongs to the AB hydrolase superfamily. ABHD16 family.

It carries out the reaction a 1,2-diacyl-sn-glycero-3-phospho-L-serine + H2O = a 2-acyl-sn-glycero-3-phospho-L-serine + a fatty acid + H(+). The enzyme catalyses a 1-acylglycerol + H2O = glycerol + a fatty acid + H(+). It catalyses the reaction 1-(9Z-octadecenoyl)-glycerol + H2O = glycerol + (9Z)-octadecenoate + H(+). Hydrolyzes the sn-1 position of glycerophospholipids with high specificity towards phosphatidylserine (PS), PS-PLA1 enzyme. Also hydrolyzes the acyl chain of glycerolipids with a preference for the monoacylglycerol (MAG) 1-acylglycerol, MAG lipase. Plays a regulatory role in cellular lipid homeostasis by modulating genes involved in neutral lipid degradation and in phospholipid synthesis and composition. The polypeptide is ABHD16B (Homo sapiens (Human)).